Reading from the N-terminus, the 298-residue chain is Ribosomal RNA small subunit methyltransferase A (298 aa).

S-adenosyl-L-methionine contacts are provided by Asn-35, Leu-37, Gly-62, Glu-83, Asp-108, and Asn-133.

This sequence belongs to the class I-like SAM-binding methyltransferase superfamily. rRNA adenine N(6)-methyltransferase family. RsmA subfamily.

The protein localises to the cytoplasm. The enzyme catalyses adenosine(1518)/adenosine(1519) in 16S rRNA + 4 S-adenosyl-L-methionine = N(6)-dimethyladenosine(1518)/N(6)-dimethyladenosine(1519) in 16S rRNA + 4 S-adenosyl-L-homocysteine + 4 H(+). Functionally, specifically dimethylates two adjacent adenosines (A1518 and A1519) in the loop of a conserved hairpin near the 3'-end of 16S rRNA in the 30S particle. May play a critical role in biogenesis of 30S subunits. The polypeptide is Ribosomal RNA small subunit methyltransferase A (Streptococcus pyogenes serotype M2 (strain MGAS10270)).